Reading from the N-terminus, the 253-residue chain is Beta-crystallin B1 (253 aa).

Residues 1–18 (MSQPAAKASATAAVNPGP) are compositionally biased toward low complexity. The interval 1–53 (MSQPAAKASATAAVNPGPDGKGKAGPPPGPAPGSGPAPAPAPAPAQPAPAAKA) is disordered. S2 is modified (N-acetylserine). The N-terminal arm stretch occupies residues 2 to 59 (SQPAAKASATAAVNPGPDGKGKAGPPPGPAPGSGPAPAPAPAPAQPAPAAKAELPPGS). A compositionally biased stretch (pro residues) spans 25–47 (GPPPGPAPGSGPAPAPAPAPAQP). Beta/gamma crystallin 'Greek key' domains are found at residues 60-99 (YKLVVFEQENFQGRRVEFSGECLNLGDRGFERVRSIIVTS) and 100-144 (GPWV…RPIK). Positions 145–149 (MDAQE) are connecting peptide. Beta/gamma crystallin 'Greek key' domains are found at residues 150-191 (HKLC…RVSS) and 192-234 (GTWV…RRLR). The C-terminal arm stretch occupies residues 236–253 (RQWHREGCFPVLAAEPPK).

This sequence belongs to the beta/gamma-crystallin family. In terms of assembly, homo/heterodimer, or complexes of higher-order. The structure of beta-crystallin oligomers seems to be stabilized through interactions between the N-terminal arms. In terms of processing, specific cleavages in the N-terminal arm occur during lens maturation and give rise to truncated forms, leading to impaired oligomerization and protein insolubilization.

Functionally, crystallins are the dominant structural components of the vertebrate eye lens. The polypeptide is Beta-crystallin B1 (CRYBB1) (Bos taurus (Bovine)).